A 431-amino-acid polypeptide reads, in one-letter code: Probable sodium/metabolite cotransporter BASS3, chloroplastic (431 aa).

A chloroplast-targeting transit peptide spans Met-1–Val-70. 9 consecutive transmembrane segments (helical) span residues Phe-110–Pro-130, Leu-145–Phe-165, Val-169–Val-189, Thr-198–Ala-218, Ile-238–Val-258, Val-261–Leu-281, Val-288–Ile-308, Leu-325–Phe-345, and Val-387–Trp-407.

This sequence belongs to the bile acid:sodium symporter (BASS) (TC 2.A.28) family.

It localises to the membrane. It is found in the plastid. Its subcellular location is the chloroplast envelope. Its function is as follows. May function as sodium-coupled metabolite transporter across the chloroplast envelope. The chain is Probable sodium/metabolite cotransporter BASS3, chloroplastic (BASS3) from Arabidopsis thaliana (Mouse-ear cress).